The chain runs to 42 residues: uncharacterized protein (42 aa).

A helical membrane pass occupies residues 18-38 (VGAISLTVMMILFFIAIVWFL).

It localises to the host membrane. This is an uncharacterized protein from His1 virus (isolate Australia/Victoria) (His1V).